We begin with the raw amino-acid sequence, 422 residues long: UDP-N-acetylglucosamine 1-carboxyvinyltransferase (422 aa).

22-23 (KN) is a binding site for phosphoenolpyruvate. Arginine 95 serves as a coordination point for UDP-N-acetyl-alpha-D-glucosamine. Catalysis depends on cysteine 119, which acts as the Proton donor. Cysteine 119 bears the 2-(S-cysteinyl)pyruvic acid O-phosphothioketal mark. UDP-N-acetyl-alpha-D-glucosamine is bound by residues 124–128 (RPIDQ), aspartate 309, and valine 331.

The protein belongs to the EPSP synthase family. MurA subfamily.

The protein localises to the cytoplasm. The catalysed reaction is phosphoenolpyruvate + UDP-N-acetyl-alpha-D-glucosamine = UDP-N-acetyl-3-O-(1-carboxyvinyl)-alpha-D-glucosamine + phosphate. The protein operates within cell wall biogenesis; peptidoglycan biosynthesis. Its function is as follows. Cell wall formation. Adds enolpyruvyl to UDP-N-acetylglucosamine. The chain is UDP-N-acetylglucosamine 1-carboxyvinyltransferase from Anaeromyxobacter dehalogenans (strain 2CP-1 / ATCC BAA-258).